The chain runs to 344 residues: Arginine N-succinyltransferase (344 aa).

Succinyl-CoA is bound at residue Leu125. The active-site Proton donor is the His229.

It belongs to the arginine N-succinyltransferase family.

The catalysed reaction is succinyl-CoA + L-arginine = N(2)-succinyl-L-arginine + CoA + H(+). The protein operates within amino-acid degradation; L-arginine degradation via AST pathway; L-glutamate and succinate from L-arginine: step 1/5. Catalyzes the transfer of succinyl-CoA to arginine to produce N(2)-succinylarginine. The sequence is that of Arginine N-succinyltransferase from Salmonella typhi.